The following is a 502-amino-acid chain: Glycerol kinase (502 aa).

T14 serves as a coordination point for ADP. Positions 14, 15, and 16 each coordinate ATP. Position 14 (T14) interacts with sn-glycerol 3-phosphate. R18 is a binding site for ADP. Positions 84, 85, 136, and 246 each coordinate sn-glycerol 3-phosphate. R84, E85, Y136, D246, and Q247 together coordinate glycerol. T268 and G311 together coordinate ADP. T268, G311, Q315, and G412 together coordinate ATP. 2 residues coordinate ADP: G412 and N416.

It belongs to the FGGY kinase family. In terms of assembly, homotetramer and homodimer (in equilibrium). Heterodimer with EIIA-Glc. Binds 1 zinc ion per glycerol kinase EIIA-Glc dimer. The zinc ion is important for dimerization.

The enzyme catalyses glycerol + ATP = sn-glycerol 3-phosphate + ADP + H(+). Its pathway is polyol metabolism; glycerol degradation via glycerol kinase pathway; sn-glycerol 3-phosphate from glycerol: step 1/1. Activity of this regulatory enzyme is affected by several metabolites. Allosterically and non-competitively inhibited by fructose 1,6-bisphosphate (FBP) and unphosphorylated phosphocarrier protein EIIA-Glc (III-Glc), an integral component of the bacterial phosphotransferase (PTS) system. Key enzyme in the regulation of glycerol uptake and metabolism. Catalyzes the phosphorylation of glycerol to yield sn-glycerol 3-phosphate. The polypeptide is Glycerol kinase (Enterobacter sp. (strain 638)).